The chain runs to 282 residues: Stage 0 sporulation protein J (282 aa).

A DNA-binding region (H-T-H motif) is located at residues 139-158; sequence EQLAKRLGKSRPHIANHLRL.

This sequence belongs to the ParB family.

It localises to the cytoplasm. The protein resides in the nucleoid. Functionally, required for the initiation of sporulation and for normal chromosome segregation. Antagonizes sporulation inhibition by Soj. It probably interacts with a specific DNA site and other proteins involved in partitioning and cell division, and antagonizes Soj in response to cell cycle events related to chromosome partitioning. This Bacillus subtilis (strain 168) protein is Stage 0 sporulation protein J.